The chain runs to 157 residues: uncharacterized protein (157 aa).

The protein belongs to the mimivirus L242/L243 family.

This is an uncharacterized protein from Acanthamoeba polyphaga (Amoeba).